The following is a 548-amino-acid chain: Membrane protein insertase YidC (548 aa).

Residues 6–26 (NLLVIALLFVSFMIWQAWEQD) form a helical membrane-spanning segment. The interval 28–56 (NPQPQTQQTTQTTTTAAGSAADQGVPASG) is disordered. A compositionally biased stretch (low complexity) spans 29 to 42 (PQPQTQQTTQTTTT). 4 helical membrane passes run 350 to 370 (FVGN…GIMY), 424 to 444 (FPLI…MGSI), 458 to 478 (LSAQ…MFFI), and 499 to 519 (PVIF…YYIV).

This sequence belongs to the OXA1/ALB3/YidC family. Type 1 subfamily. In terms of assembly, interacts with the Sec translocase complex via SecD. Specifically interacts with transmembrane segments of nascent integral membrane proteins during membrane integration.

The protein resides in the cell inner membrane. Its function is as follows. Required for the insertion and/or proper folding and/or complex formation of integral membrane proteins into the membrane. Involved in integration of membrane proteins that insert both dependently and independently of the Sec translocase complex, as well as at least some lipoproteins. Aids folding of multispanning membrane proteins. In Salmonella typhimurium (strain LT2 / SGSC1412 / ATCC 700720), this protein is Membrane protein insertase YidC.